The primary structure comprises 80 residues: uncharacterized protein (80 aa).

The signal sequence occupies residues 1–20 (MVAADHRALGSNKSYPASQT). The tract at residues 1–21 (MVAADHRALGSNKSYPASQTA) is disordered. A compositionally biased stretch (polar residues) spans 11–21 (SNKSYPASQTA).

This is an uncharacterized protein from Mycobacterium tuberculosis (strain CDC 1551 / Oshkosh).